The chain runs to 461 residues: Trigger factor (461 aa).

The PPIase FKBP-type domain occupies 169–256 (GDTAVIDFAG…LKDLKIKELP (88 aa)). A disordered region spans residues 432 to 461 (PGEAIEPGSGEDAPPEVAAGATEPEAQPNS).

It belongs to the FKBP-type PPIase family. Tig subfamily.

The protein resides in the cytoplasm. The enzyme catalyses [protein]-peptidylproline (omega=180) = [protein]-peptidylproline (omega=0). Functionally, involved in protein export. Acts as a chaperone by maintaining the newly synthesized protein in an open conformation. Functions as a peptidyl-prolyl cis-trans isomerase. The polypeptide is Trigger factor (Gloeobacter violaceus (strain ATCC 29082 / PCC 7421)).